We begin with the raw amino-acid sequence, 1344 residues long: Myb-binding protein 1A (1344 aa).

The segment at 1–24 is disordered; it reads MAEMKSPTKAEPATPAEAAQSDRH. N-acetylalanine is present on A2. Residues 2-580 are interaction with MYB; the sequence is AEMKSPTKAE…WDQMMSTLKE (579 aa). Residues 7 to 19 show a composition bias toward low complexity; it reads PTKAEPATPAEAA. N6-acetyllysine occurs at positions 69 and 156. Short sequence motifs (nuclear export signal) lie at residues 238-256 and 261-279; these read SEDNIPSLVNILKVAANSV and KLPNVALDLLRLALKESRF. Disordered regions lie at residues 710–751 and 1146–1344; these read DEKQ…DKDV and QRPK…VQTP. The span at 732–747 shows a compositional bias: acidic residues; the sequence is SDMDSEDGEESEEEDR. Residues 1148-1159 are compositionally biased toward basic and acidic residues; that stretch reads PKSEKKNAKDIP. K1149 is covalently cross-linked (Glycyl lysine isopeptide (Lys-Gly) (interchain with G-Cter in SUMO2)). Residues 1152-1344 form a required for nuclear and nucleolar localization region; sequence KKNAKDIPSD…RVASRRVQTP (193 aa). Phosphoserine occurs at positions 1160 and 1164. The segment covering 1168-1185 has biased composition (basic residues); it reads TKRKKKGFLPETKKRKKL. At S1187 the chain carries Phosphoserine. Positions 1188-1202 are enriched in polar residues; that stretch reads EGTTPEKNAASQQDA. Residue T1191 is modified to Phosphothreonine. S1219 and S1244 each carry phosphoserine. A compositionally biased stretch (polar residues) spans 1249-1258; it reads NPTLSPSTPA. A Phosphothreonine modification is found at T1251. The residue at position 1253 (S1253) is a Phosphoserine. 2 positions are modified to phosphothreonine: T1256 and T1277. Phosphoserine occurs at positions 1280, 1303, and 1318. A compositionally biased stretch (low complexity) spans 1317–1329; sequence LSLVSRSPSLLQS. Position 1322 is a citrulline (R1322). Residues S1323, S1325, and S1329 each carry the phosphoserine modification.

It belongs to the MYBBP1A family. In terms of assembly, component of the B-WICH complex, at least composed of SMARCA5/SNF2H, BAZ1B/WSTF, SF3B1, DEK, MYO1C, ERCC6, MYBBP1A and DDX21. Binds to and represses JUN and MYB via the leucine zipper regions present in these proteins. Also binds to and represses PPARGC1A: this interaction is abrogated when PPARGC1A is phosphorylated by MAPK1/ERK. Binds to and stimulates transcription by AHR. Binds to KPNA2. Interacts with CLOCK and CRY1. Post-translationally, citrullinated by PADI4. In terms of tissue distribution, ubiquitously expressed.

It is found in the nucleus. The protein localises to the nucleolus. The protein resides in the cytoplasm. Functionally, may activate or repress transcription via interactions with sequence specific DNA-binding proteins. Repression may be mediated at least in part by histone deacetylase activity (HDAC activity). Acts as a corepressor and in concert with CRY1, represses the transcription of the core circadian clock component PER2. Preferentially binds to dimethylated histone H3 'Lys-9' (H3K9me2) on the PER2 promoter. Has a role in rRNA biogenesis together with PWP1. This is Myb-binding protein 1A (Mybbp1a) from Mus musculus (Mouse).